A 428-amino-acid polypeptide reads, in one-letter code: Zinc metalloproteinase nas-27 (428 aa).

An N-terminal signal peptide occupies residues 1 to 17; that stretch reads MQILPIFFPLLITSLHA. A propeptide spanning residues 18 to 57 is cleaved from the precursor; sequence IPRGRRAVRNRNEGDINSLVGVGQYLYQGDIAVVKSRARR. The region spanning 58 to 255 is the Peptidase M12A domain; sequence AVIRQKHKKW…SRMNVLYNCH (198 aa). 6 cysteine pairs are disulfide-bonded: C99–C254, C120–C141, C258–C276, C281–C290, C306–C339, and C366–C386. Residue H150 participates in Zn(2+) binding. Residue E151 is part of the active site. The Zn(2+) site is built by H154 and H160. N181 is a glycosylation site (N-linked (GlcNAc...) asparagine). One can recognise an EGF-like domain in the interval 250–291; sequence VLYNCHERCANTLNRCQQGGYPAPSDCSQCVCPDGFGGNFCE. Residues 306-428 enclose the CUB domain; that stretch reads CGGVLWASET…LDFNIEYRAV (123 aa). Residue N377 is glycosylated (N-linked (GlcNAc...) asparagine).

Zn(2+) is required as a cofactor.

Its subcellular location is the secreted. Functionally, metalloprotease. The polypeptide is Zinc metalloproteinase nas-27 (nas-27) (Caenorhabditis elegans).